Consider the following 102-residue polypeptide: Feather keratin (102 aa).

Serine 1 bears the N-acetylserine mark.

Belongs to the avian keratin family. As to quaternary structure, the avian keratins (F-ker, S-ker, C-ker and B-ker) are a complex mixture of very similar polypeptides.

This Dromaius novaehollandiae (Emu) protein is Feather keratin.